Consider the following 345-residue polypeptide: Transcriptional activator hacA (345 aa).

The disordered stretch occupies residues Met-1–Leu-106. A compositionally biased stretch (polar residues) spans Pro-30–Val-40. Basic and acidic residues-rich tracts occupy residues Lys-41–Lys-51 and Lys-77–Leu-91. One can recognise a bZIP domain in the interval Glu-83–Leu-146. Positions Arg-85 to Arg-138 are basic motif. Residues Leu-139–Leu-146 are leucine-zipper. Residues Arg-186–Ser-210 form a disordered region. The span at Pro-192–Ser-210 shows a compositional bias: polar residues.

It belongs to the bZIP family. As to quaternary structure, homodimer.

The protein resides in the nucleus. Its function is as follows. Transcriptional activator involved in the unfolded protein response (UPR) pathway. Recognizes and binds to the UPR element (UPRE) in the promoter of UPR-regulated genes. Increases the synthesis of endoplasmic reticulum-resident proteins required for protein folding as well as components of the secretory pathway. The protein is Transcriptional activator hacA (hacA) of Aspergillus oryzae (strain ATCC 42149 / RIB 40) (Yellow koji mold).